The primary structure comprises 92 residues: N(2)-fixation sustaining protein CowN (92 aa).

The protein belongs to the CowN family.

Functionally, is required to sustain N(2)-dependent growth in the presence of low levels of carbon monoxide (CO). Probably acts by protecting the N(2) fixation ability of the nitrogenase complex, which is inactivated in the presence of CO. This chain is N(2)-fixation sustaining protein CowN, found in Cereibacter sphaeroides (strain KD131 / KCTC 12085) (Rhodobacter sphaeroides).